The primary structure comprises 160 residues: Phosphopantetheine adenylyltransferase (160 aa).

Belongs to the eukaryotic CoaD family.

It is found in the cytoplasm. It carries out the reaction (R)-4'-phosphopantetheine + ATP + H(+) = 3'-dephospho-CoA + diphosphate. The protein operates within cofactor biosynthesis; coenzyme A biosynthesis. Functionally, reversibly transfers an adenylyl group from ATP to 4'-phosphopantetheine, yielding dephospho-CoA (dPCoA) and pyrophosphate. The chain is Phosphopantetheine adenylyltransferase from Pyrococcus furiosus (strain ATCC 43587 / DSM 3638 / JCM 8422 / Vc1).